The sequence spans 138 residues: Small ribosomal subunit protein uS11c (138 aa).

This sequence belongs to the universal ribosomal protein uS11 family. Part of the 30S ribosomal subunit.

It is found in the plastid. It localises to the chloroplast. This chain is Small ribosomal subunit protein uS11c, found in Morus indica (Mulberry).